A 185-amino-acid chain; its full sequence is MQAKLLFTRLNFRRPSTTLRQFPLTCFLFHSKAFYSDLVTKEPLITPKRIINKTPGLNLSISERASNRLAEIYRNSKENLRISVESGGCHGFQYNLTLEPATKPDIKNDVKDKEFSDDLDDDDSKDIIYVLPEDKGRVIIDSKSLNILNNTTLTYTNELIGSSFKIINGSLKSSCGCGSSFDIEN.

Positions 89, 175, and 177 each coordinate Fe cation.

It belongs to the HesB/IscA family.

The protein resides in the mitochondrion matrix. Functionally, involved in the assembly of mitochondrial and cytoplasmic iron-sulfur proteins. Probably involved in the binding of an intermediate of Fe/S cluster assembly. The sequence is that of Iron-sulfur assembly protein 2 (ISA2) from Saccharomyces cerevisiae (strain ATCC 204508 / S288c) (Baker's yeast).